The primary structure comprises 490 residues: Endoglucanase 13 (490 aa).

The first 26 residues, 1–26 (MSQLKNGSSQCLWTSICIVLIVMSMA), serve as a signal peptide directing secretion. A glycan (N-linked (GlcNAc...) asparagine) is linked at N6. D86 acts as the Nucleophile in catalysis. Residues H412, D464, and E473 contribute to the active site.

Belongs to the glycosyl hydrolase 9 (cellulase E) family.

The protein localises to the secreted. The enzyme catalyses Endohydrolysis of (1-&gt;4)-beta-D-glucosidic linkages in cellulose, lichenin and cereal beta-D-glucans.. In Arabidopsis thaliana (Mouse-ear cress), this protein is Endoglucanase 13.